A 111-amino-acid polypeptide reads, in one-letter code: UPF0321 protein P20C8.02c (111 aa).

The signal sequence occupies residues Met1–Ala17. Asn20 carries an N-linked (GlcNAc...) asparagine glycan.

This sequence belongs to the UPF0321 family.

This is UPF0321 protein P20C8.02c from Schizosaccharomyces pombe (strain 972 / ATCC 24843) (Fission yeast).